The following is a 946-amino-acid chain: Bifunctional glutamine synthetase adenylyltransferase/adenylyl-removing enzyme (946 aa).

Positions 1–440 are adenylyl removase; sequence MKPLSSPLQQ…VFNELIGDDE (440 aa). Residues 449 to 946 form an adenylyl transferase region; sequence SEQWRELWQD…ASWQKWLVEE (498 aa).

This sequence belongs to the GlnE family. The cofactor is Mg(2+).

The enzyme catalyses [glutamine synthetase]-O(4)-(5'-adenylyl)-L-tyrosine + phosphate = [glutamine synthetase]-L-tyrosine + ADP. The catalysed reaction is [glutamine synthetase]-L-tyrosine + ATP = [glutamine synthetase]-O(4)-(5'-adenylyl)-L-tyrosine + diphosphate. Its function is as follows. Involved in the regulation of glutamine synthetase GlnA, a key enzyme in the process to assimilate ammonia. When cellular nitrogen levels are high, the C-terminal adenylyl transferase (AT) inactivates GlnA by covalent transfer of an adenylyl group from ATP to specific tyrosine residue of GlnA, thus reducing its activity. Conversely, when nitrogen levels are low, the N-terminal adenylyl removase (AR) activates GlnA by removing the adenylyl group by phosphorolysis, increasing its activity. The regulatory region of GlnE binds the signal transduction protein PII (GlnB) which indicates the nitrogen status of the cell. This is Bifunctional glutamine synthetase adenylyltransferase/adenylyl-removing enzyme from Shigella boydii serotype 4 (strain Sb227).